A 60-amino-acid polypeptide reads, in one-letter code: Large ribosomal subunit protein bL32 (60 aa).

The disordered stretch occupies residues 1–23 (MAVPKRKKSKSRRNMHRSHHAIK).

Belongs to the bacterial ribosomal protein bL32 family.

The polypeptide is Large ribosomal subunit protein bL32 (Wolbachia sp. subsp. Brugia malayi (strain TRS)).